Here is a 101-residue protein sequence, read N- to C-terminus: Gamma-secretase subunit PEN-2 (101 aa).

The Cytoplasmic segment spans residues 1-17; that stretch reads MNLERVSNEEKLNLCRK. Residues 18–36 constitute an intramembrane region (helical); sequence YYLGGFAFLPFLWLVNIFW. Residues 37–57 lie on the Cytoplasmic side of the membrane; sequence FFREAFIVPAYTEQSQIKGYV. The chain crosses the membrane as a helical span at residues 58-78; that stretch reads WRSAVGFFLWVIVLSTWITIF. Topologically, residues 79-101 are lumenal; it reads QIYRPRWGALGDYLSFTIPLGTP.

It belongs to the PEN-2 family. The functional gamma-secretase complex is composed of at least four polypeptides: a presenilin homodimer (PSEN1 or PSEN2), nicastrin (NCSTN), APH1 (APH1A or APH1B) and PSENEN.

It is found in the endoplasmic reticulum membrane. It localises to the golgi apparatus. Its subcellular location is the golgi stack membrane. The protein resides in the cell membrane. The protein localises to the membrane. Essential subunit of the gamma-secretase complex, an endoprotease complex that catalyzes the intramembrane cleavage of integral membrane proteins such as Notch receptors and APP (amyloid-beta precursor protein). The gamma-secretase complex plays a role in Notch and Wnt signaling cascades and regulation of downstream processes via its role in processing key regulatory proteins, and by regulating cytosolic CTNNB1 levels. PSENEN modulates both endoproteolysis of presenilin and gamma-secretase activity. This is Gamma-secretase subunit PEN-2 (PSENEN) from Bos taurus (Bovine).